Reading from the N-terminus, the 1485-residue chain is MIERGKFRSLTLVNWNGFFARTFDLDELVTTLSGGNGAGKSTTMAAFVTALIPDLTLLHFRNTTEAGATSGSRDKGLHGKLRAGVCYSTLDVVNSRHQRVVVGVRLQQVAGRDRKVDIKPFTIQGLPTAIQPTEILTELVAERQARVLSLPELKERVEAMEGVQFKQFNSITDYHSLMFDLGVIPKRLRSSADRSKFYRLIEASLYGGISSAITRSLRDYLLPENSGVRKAFQDMEAALRENRMTLEAIRVTQSDRDLFKHLISEATSYVAADYMRHANERRIHLDSALVLRRDLFSSRKQLVTEQYRHVEMSRELAEQSGAESDLETDYQAASDHLNLVQTAMRQQEKIERYQSDLEELTYRLEEQSEVVSEASEQQADNEARAEAAELEVDELKSQLADYQQALDVQQTRAIQYQQALQALERARALCQLPELTADNAEEWLETFHAKEQEATESLLQLEQKLSVADAAHSQFEQAYQLVVNIAGEVSRSEAWQTARELLRDWPSQQHLAERVQPLRMRLSELEQRLRAQQDAERLLQEFCKRQGNAYQPEELEALQRELESQVEELSLSVSDAGERRMAMRQELEQLKLKIQELTARAPVWLAAQDALSQLSEQSGEALEDSRQVTEYMQQLLERERETTVERDEIAASKRAIEAQIERLSQPSGAEDARLIALAERFGGVLLSEIYDDVTIDDAPYFSALYGPSRHGIVVPDLSLVREHLQGLDDCPEDLYLIEGDPQSFDDSVFAVEEHEKAVVVKIADRQWRYSRYPEVPLFGRAARENRLETLYQERDRLAERYATLSFDVQKTQRTHQAFSRFIGSHLAVAFDADPEAEIRLLNTRRGEIERALNAHEDQNQQQRQQFDQAKEGISALNRLIPLVSLLLDETLADRVEEITEELAEAQEAARYIQQHGVSLTKLEPLLSVLQSDPQQHEQLQESYVLAQNSQRLAKQQAFALTEVVQRRAHFSYTDSAGMLTENSDLNDKLRQRLEQAEAERTRAREQLRQYQSQFTQYSQVLASLKSSYDAKRDMLKELSQELVDIGVPADANAEARARARRDELHAALSTNRSRRNQLEKQLTFCEAEMDSLQKKLRKLERDYHQIREQVVNAKAGWCAVMRMVKDNGVERRLHRRELAYMDGDELRSMSDKALGALRLAVADNEHLRDVLRLSEDPKRPERKIQFYIAVYQHLRERIRQDIIRTDDPVEAIEQMEIELGRLTEELTAREQKLAISSKSVSNIIRKTIHREQNRIRMLNQGLQAVSFGQVKSVRLNVNVREAHATLLDVLSEQQEQHQDLFNSNRLTFSEALAKLYQRLNPQMDMGQRLPQTIGEELLDYRNYLELEVEVYRGADGWLRAESGALSTGEAIGTGMSILVMVVQSWEEESRRLRGKDISPCRLLFLDEAARLDAKSIATLFELCERLEMQLIIAAPENISPEKGTTYKLVRKVFQNHEHVHVVGLRGFANEIPSLPPIAAELQQGG.

G34–S41 serves as a coordination point for ATP. Coiled coils occupy residues L337–Q480, Q509–L605, R780–S805, E835–H915, G977–G1116, and E1210–I1235. The tract at residues P666–R783 is flexible hinge.

It belongs to the SMC family. MukB subfamily. Homodimerization via its hinge domain. Binds to DNA via its C-terminal region. Interacts, and probably forms a ternary complex, with MukE and MukF via its C-terminal region. The complex formation is stimulated by calcium or magnesium. Interacts with tubulin-related protein FtsZ.

It localises to the cytoplasm. The protein resides in the nucleoid. Functionally, plays a central role in chromosome condensation, segregation and cell cycle progression. Functions as a homodimer, which is essential for chromosome partition. Involved in negative DNA supercoiling in vivo, and by this means organize and compact chromosomes. May achieve or facilitate chromosome segregation by condensation DNA from both sides of a centrally located replisome during cell division. This is Chromosome partition protein MukB from Yersinia pseudotuberculosis serotype O:1b (strain IP 31758).